The chain runs to 1290 residues: Period circadian protein homolog 1 (1290 aa).

Residues 1-134 (MSGPLEGADG…SSEQSARART (134 aa)) are disordered. The tract at residues 1–151 (MSGPLEGADG…LRELKLRLPP (151 aa)) is interaction with BTRC. Residues 25-38 (VPSPGPPQHRPCPG) are compositionally biased toward pro residues. 2 stretches are compositionally biased toward low complexity: residues 48–57 (NSNGSSGNES) and 64–115 (GASQ…ASSE). Polar residues predominate over residues 116 to 132 (QDNPSTSGCSSEQSARA). Thr121 carries the post-translational modification Phosphothreonine; by CSNK1E. A phosphoserine; by CSNK1E mark is found at Ser122 and Ser126. A Nuclear export signal 1 motif is present at residues 138-147 (LMTALRELKL). 2 PAS domains span residues 208-275 (ITSE…PSRL) and 348-414 (YEAP…KILQ). One can recognise a PAC domain in the interval 422–465 (HSPIRFCARNGEYVTMDTSWAGFVHPWSRKVAFVLGRHKVRTAP). A Nuclear export signal 2 motif is present at residues 489–498 (LSEQIHRLLL). Disordered regions lie at residues 508–544 (GLCG…PAPV) and 646–698 (TTKR…KEPV). Composition is skewed to low complexity over residues 517–533 (SPGP…SNGG) and 652–662 (ASSSSYTTSSA). The tract at residues 596–815 (ELEAGSAPVQ…GLDSSSTAPS (220 aa)) is required for phosphorylation by CSNK1E. 3 positions are modified to phosphoserine: Ser661, Ser663, and Ser704. 3 disordered regions span residues 749 to 772 (GLAP…APDA), 805 to 874 (RGLD…PPAT), and 938 to 977 (ALQT…FNSR). Positions 751-769 (APGPAPSPAPSPTVAPDPA) are enriched in pro residues. The residue at position 815 (Ser815) is a Phosphoserine. Positions 827-843 (APPSRRHHCRSKAKRSR) match the Nuclear localization signal motif. Over residues 830–847 (SRRHHCRSKAKRSRHHQN) the composition is skewed to basic residues. Residues 860–874 (SPVPPSTPWPTPPAT) are compositionally biased toward pro residues. Residues 950–961 (ASHSPSPSLPAL) are compositionally biased toward low complexity. Ser979 and Ser980 each carry phosphoserine. The Nuclear export signal 3 signature appears at 982–989 (LQLNLLQL). The interval 996 to 1037 (EGAAVAGGPGSSAGPPPPSAEAAEPEARLAEVTESSNQDALS) is disordered. The LXXLL signature appears at 1043–1047 (LELLL). A compositionally biased stretch (low complexity) spans 1051–1062 (SRSGTGSAASGS). Disordered stretches follow at residues 1051–1098 (SRSG…SKYF) and 1207–1290 (SSTQ…NCTS). A compositionally biased stretch (gly residues) spans 1063 to 1077 (LGSGLGSGSGSGSHE). Residues 1078-1095 (GGSTSASITRSSQSSHTS) show a composition bias toward low complexity. Residues 1149–1290 (SRDMTSVLKQ…ALPTAGNCTS (142 aa)) are CRY binding domain. Residues 1236–1248 (GEQGSSGGGSGEG) are compositionally biased toward gly residues.

In terms of assembly, homodimer. Component of the circadian core oscillator, which includes the CRY proteins, CLOCK or NPAS2, BMAL1 or BMAL2, CSNK1D and/or CSNK1E, TIMELESS, and the PER proteins. Interacts directly with TIMELESS, PER2, PER3, CRY1 and CRY2. Interacts with BMAL1 and CLOCK. Interacts with GPRASP1. Interacts (phosphorylated) with BTRC and FBXW11; the interactions trigger proteasomal degradation. Interacts with NONO, WDR5 and SFPQ. Interacts with USP2. Interacts with HNF4A. Phosphorylated on serine residues by CSNK1D, CSNK1E and probably also by CSNK1G2. Phosphorylation by CSNK1D or CSNK1E promotes nuclear location of PER proteins as well as ubiquitination and subsequent degradation. May be dephosphorylated by PP1. In terms of processing, ubiquitinated; requires phosphorylation by CSNK1E and interaction with BTRC and FBXW11. Deubiquitinated by USP2. In terms of tissue distribution, widely expressed. Expressed in hair follicles (at protein level). Found in heart, brain, placenta, lung, liver, skeletal muscle, pancreas, kidney, spleen, thymus, prostate, testis, ovary and small intestine. Highest level in skeletal muscle.

Its subcellular location is the nucleus. It localises to the cytoplasm. Transcriptional repressor which forms a core component of the circadian clock. The circadian clock, an internal time-keeping system, regulates various physiological processes through the generation of approximately 24 hour circadian rhythms in gene expression, which are translated into rhythms in metabolism and behavior. It is derived from the Latin roots 'circa' (about) and 'diem' (day) and acts as an important regulator of a wide array of physiological functions including metabolism, sleep, body temperature, blood pressure, endocrine, immune, cardiovascular, and renal function. Consists of two major components: the central clock, residing in the suprachiasmatic nucleus (SCN) of the brain, and the peripheral clocks that are present in nearly every tissue and organ system. Both the central and peripheral clocks can be reset by environmental cues, also known as Zeitgebers (German for 'timegivers'). The predominant Zeitgeber for the central clock is light, which is sensed by retina and signals directly to the SCN. The central clock entrains the peripheral clocks through neuronal and hormonal signals, body temperature and feeding-related cues, aligning all clocks with the external light/dark cycle. Circadian rhythms allow an organism to achieve temporal homeostasis with its environment at the molecular level by regulating gene expression to create a peak of protein expression once every 24 hours to control when a particular physiological process is most active with respect to the solar day. Transcription and translation of core clock components (CLOCK, NPAS2, BMAL1, BMAL2, PER1, PER2, PER3, CRY1 and CRY2) plays a critical role in rhythm generation, whereas delays imposed by post-translational modifications (PTMs) are important for determining the period (tau) of the rhythms (tau refers to the period of a rhythm and is the length, in time, of one complete cycle). A diurnal rhythm is synchronized with the day/night cycle, while the ultradian and infradian rhythms have a period shorter and longer than 24 hours, respectively. Disruptions in the circadian rhythms contribute to the pathology of cardiovascular diseases, cancer, metabolic syndromes and aging. A transcription/translation feedback loop (TTFL) forms the core of the molecular circadian clock mechanism. Transcription factors, CLOCK or NPAS2 and BMAL1 or BMAL2, form the positive limb of the feedback loop, act in the form of a heterodimer and activate the transcription of core clock genes and clock-controlled genes (involved in key metabolic processes), harboring E-box elements (5'-CACGTG-3') within their promoters. The core clock genes: PER1/2/3 and CRY1/2 which are transcriptional repressors form the negative limb of the feedback loop and interact with the CLOCK|NPAS2-BMAL1|BMAL2 heterodimer inhibiting its activity and thereby negatively regulating their own expression. This heterodimer also activates nuclear receptors NR1D1/2 and RORA/B/G, which form a second feedback loop and which activate and repress BMAL1 transcription, respectively. Regulates circadian target genes expression at post-transcriptional levels, but may not be required for the repression at transcriptional level. Controls PER2 protein decay. Represses CRY2 preventing its repression on CLOCK/BMAL1 target genes such as FXYD5 and SCNN1A in kidney and PPARA in liver. Besides its involvement in the maintenance of the circadian clock, has an important function in the regulation of several processes. Participates in the repression of glucocorticoid receptor NR3C1/GR-induced transcriptional activity by reducing the association of NR3C1/GR to glucocorticoid response elements (GREs) by BMAL1:CLOCK. Plays a role in the modulation of the neuroinflammatory state via the regulation of inflammatory mediators release, such as CCL2 and IL6. In spinal astrocytes, negatively regulates the MAPK14/p38 and MAPK8/JNK MAPK cascades as well as the subsequent activation of NFkappaB. Coordinately regulates the expression of multiple genes that are involved in the regulation of renal sodium reabsorption. Can act as gene expression activator in a gene and tissue specific manner, in kidney enhances WNK1 and SLC12A3 expression in collaboration with CLOCK. Modulates hair follicle cycling. Represses the CLOCK-BMAL1 induced transcription of BHLHE40/DEC1. The sequence is that of Period circadian protein homolog 1 (PER1) from Homo sapiens (Human).